A 557-amino-acid polypeptide reads, in one-letter code: 2-isopropylmalate synthase (557 aa).

A Pyruvate carboxyltransferase domain is found at 33 to 307 (PIWCSSDLRD…DPQLDFSDID (275 aa)). Residues Asp-42, His-246, His-248, and Asn-282 each contribute to the Mg(2+) site. Positions 439–557 (ANAPYALVSH…SLSQQEAKAA (119 aa)) are regulatory domain.

This sequence belongs to the alpha-IPM synthase/homocitrate synthase family. LeuA type 2 subfamily. As to quaternary structure, homodimer. Mg(2+) serves as cofactor.

It is found in the cytoplasm. It catalyses the reaction 3-methyl-2-oxobutanoate + acetyl-CoA + H2O = (2S)-2-isopropylmalate + CoA + H(+). The protein operates within amino-acid biosynthesis; L-leucine biosynthesis; L-leucine from 3-methyl-2-oxobutanoate: step 1/4. Functionally, catalyzes the condensation of the acetyl group of acetyl-CoA with 3-methyl-2-oxobutanoate (2-ketoisovalerate) to form 3-carboxy-3-hydroxy-4-methylpentanoate (2-isopropylmalate). This Pseudomonas putida (strain GB-1) protein is 2-isopropylmalate synthase.